The primary structure comprises 193 residues: Small COPII coat GTPase SAR1 (193 aa).

Positions 3-5 (FLW) match the STAR; SAR1-N-terminal activation recruitment. Required for the activation and subsequent recruitment to ER membrane motif. A mediates recruitment to ER membranes region spans residues 11–15 (VLNML). Position 30 (aspartate 30) interacts with Mg(2+). GDP contacts are provided by asparagine 31, alanine 32, glycine 33, lysine 34, threonine 35, and threonine 36. Asparagine 31 serves as a coordination point for GTP. 4 residues coordinate GTP: glycine 33, lysine 34, threonine 35, and threonine 36. Aspartate 71 provides a ligand contact to Mg(2+). The GDP site is built by asparagine 130, lysine 131, aspartate 133, valine 176, and leucine 177. GTP contacts are provided by asparagine 130, lysine 131, aspartate 133, valine 176, and leucine 177.

The protein belongs to the small GTPase superfamily. SAR1 family. Homodimer; upon association with membrane. Part of the coat protein complex II/COPII, composed of SEC23/24 and SEC13/31 heterodimers, that it helps recruit and assemble on endoplasmic reticulum (ER) membranes at ER exit sites.

It is found in the endoplasmic reticulum membrane. Its subcellular location is the golgi apparatus. It localises to the golgi stack membrane. The protein resides in the cytoplasm. The protein localises to the cytosol. The enzyme catalyses GTP + H2O = GDP + phosphate + H(+). With respect to regulation, small GTPases activation is mediated by guanine exchange factors (GEF), while inactivation through hydrolysis of the bound GTP is stimulated by GTPase activating proteins (GAP). In terms of biological role, small GTPase that cycles between an active GTP-bound and an inactive GDP-bound state and mainly functions in vesicle-mediated endoplasmic reticulum (ER) to Golgi transport. The active GTP-bound form inserts into the endoplasmic reticulum membrane where it recruits the remainder of the coat protein complex II/COPII. The coat protein complex II assembling and polymerizing on endoplasmic reticulum membrane is responsible for both the sorting of cargos and the deformation and budding of membranes into vesicles destined to the Golgi. Plays a role in transporting the tyrosine kinase receptor let-23 from the endoplasmic reticulum to the plasma membrane of vulval precursor cells. The protein is Small COPII coat GTPase SAR1 of Caenorhabditis elegans.